Consider the following 150-residue polypeptide: uncharacterized protein (150 aa).

This is an uncharacterized protein from Methanocaldococcus jannaschii (strain ATCC 43067 / DSM 2661 / JAL-1 / JCM 10045 / NBRC 100440) (Methanococcus jannaschii).